A 393-amino-acid polypeptide reads, in one-letter code: METVAAAGYAHGAATRSPACCAAMSFSQSYRPKAARPATSFYGESLRANTARTSFPAGRQSKAASRAALTTRCAIGDSLEEFLTKATPDKNLIRLLICMGEAMRTIAFKVRTASCGGTACVNSFGDEQLAVDMLADKLLFEALEYSHVCKYACSEEVPELQDMGGPVEGGFSVAFDPLDGSSIVDTNFTVGTIFGVWPGDKLTGVTGGDQVAAAMGIYGPRTTFVVALKDCPGTHEFLLLDEGKWQHVKDTTSIGEGKMFSPGNLRATFDNPDYDKLVNYYVKEKYTLRYTGGMVPDVNQIIVKEKGIFTNVTSPTAKAKLRLLFEVAPLGFLIEKAGGHSSDGKQSVLDKVISVLDERTQVAYGSKNEIIRFEETLYGSSRLAASATVGATA.

A disulfide bridge links Cys115 with Cys120. 5 residues coordinate Mg(2+): Asp126, Glu155, Asp176, Leu178, and Asp179. Substrate is bound by residues 179–182 (DGSS), Tyr290, and Lys320. Position 326 (Glu326) interacts with Mg(2+).

It belongs to the FBPase class 1 family. Homodimer. Mg(2+) is required as a cofactor.

It is found in the plastid. It localises to the chloroplast. The enzyme catalyses D-sedoheptulose 1,7-bisphosphate + H2O = D-sedoheptulose 7-phosphate + phosphate. It functions in the pathway carbohydrate biosynthesis; Calvin cycle. This is Sedoheptulose-1,7-bisphosphatase, chloroplastic from Triticum aestivum (Wheat).